The sequence spans 218 residues: MQHAPDLVHSKDLTFVLRLDNEDILRKLFYLEAKRNNFSVEINEEWTLKINFPSKILELYKLLINNFYLKNFAKEELQKELYKELFPNCQIPFEQLIEEVSFFENFIECLKEFYIKKSLAQSIMFLLVSKYIEEHDVAKSLFKSESFKKVSELEKFKPYYDINKCDEVDNYVFNCILNDVKGPYIKNLSSSILDLVNHCQPDCEIVSIEILGNSAVLV.

This is an uncharacterized protein from Rickettsia prowazekii (strain Madrid E).